The chain runs to 276 residues: NADPH-dependent 7-cyano-7-deazaguanine reductase (276 aa).

83 to 85 (IES) contributes to the substrate binding site. Position 85 to 86 (85 to 86 (SK)) interacts with NADPH. The active-site Thioimide intermediate is C184. Catalysis depends on D191, which acts as the Proton donor. Residue 223–224 (HE) participates in substrate binding. NADPH is bound at residue 252-253 (RG).

Belongs to the GTP cyclohydrolase I family. QueF type 2 subfamily. In terms of assembly, homodimer.

It is found in the cytoplasm. It catalyses the reaction 7-aminomethyl-7-carbaguanine + 2 NADP(+) = 7-cyano-7-deazaguanine + 2 NADPH + 3 H(+). Its pathway is tRNA modification; tRNA-queuosine biosynthesis. In terms of biological role, catalyzes the NADPH-dependent reduction of 7-cyano-7-deazaguanine (preQ0) to 7-aminomethyl-7-deazaguanine (preQ1). In Pseudomonas fluorescens (strain ATCC BAA-477 / NRRL B-23932 / Pf-5), this protein is NADPH-dependent 7-cyano-7-deazaguanine reductase.